Here is a 421-residue protein sequence, read N- to C-terminus: Gamma-glutamyl phosphate reductase (421 aa).

The protein belongs to the gamma-glutamyl phosphate reductase family.

It localises to the cytoplasm. It carries out the reaction L-glutamate 5-semialdehyde + phosphate + NADP(+) = L-glutamyl 5-phosphate + NADPH + H(+). Its pathway is amino-acid biosynthesis; L-proline biosynthesis; L-glutamate 5-semialdehyde from L-glutamate: step 2/2. Functionally, catalyzes the NADPH-dependent reduction of L-glutamate 5-phosphate into L-glutamate 5-semialdehyde and phosphate. The product spontaneously undergoes cyclization to form 1-pyrroline-5-carboxylate. This chain is Gamma-glutamyl phosphate reductase, found in Acinetobacter baumannii (strain ACICU).